The chain runs to 252 residues: Glucosamine-6-phosphate deaminase (252 aa).

Catalysis depends on aspartate 67, which acts as the Proton acceptor; for enolization step. Asparagine 137 (for ring-opening step) is an active-site residue. The Proton acceptor; for ring-opening step role is filled by histidine 139. The active-site For ring-opening step is the glutamate 144.

It belongs to the glucosamine/galactosamine-6-phosphate isomerase family. NagB subfamily.

It catalyses the reaction alpha-D-glucosamine 6-phosphate + H2O = beta-D-fructose 6-phosphate + NH4(+). It functions in the pathway amino-sugar metabolism; N-acetylneuraminate degradation; D-fructose 6-phosphate from N-acetylneuraminate: step 5/5. Its function is as follows. Catalyzes the reversible isomerization-deamination of glucosamine 6-phosphate (GlcN6P) to form fructose 6-phosphate (Fru6P) and ammonium ion. This chain is Glucosamine-6-phosphate deaminase, found in Staphylococcus aureus (strain MRSA252).